Reading from the N-terminus, the 518-residue chain is Nicotine N-demethylase CYP82E3 (518 aa).

Residues 2–22 (VFPVEAIVGLVTFTFLFYFLW) form a helical membrane-spanning segment. K254 participates in a covalent cross-link: Glycyl lysine isopeptide (Lys-Gly) (interchain with G-Cter in ubiquitin). Heme is bound at residue C458.

It belongs to the cytochrome P450 family. CYP82E2 subfamily. Heme serves as cofactor. As to expression, expressed in leaves.

Its subcellular location is the membrane. It catalyses the reaction (S)-nicotine + reduced [NADPH--hemoprotein reductase] + O2 = (S)-nornicotine + formaldehyde + oxidized [NADPH--hemoprotein reductase] + H2O + H(+). It participates in alkaloid biosynthesis; nicotine biosynthesis. Involved in the biosynthesis of pyridine alkaloid natural products, leading mainly to the production of anabasine, anatabine, nicotine and nornicotine, effective deterrents against herbivores with antiparasitic and pesticide properties (neurotoxins); nornicotine serves as the precursor in the synthesis of the carcinogen compound N'-nitrosonornicotine (NNN). Catalyzes the demethylation of nicotine to form nornicotine. In Nicotiana tomentosiformis (Tobacco), this protein is Nicotine N-demethylase CYP82E3.